The primary structure comprises 372 residues: Lysophosphatidic acid receptor 5 (372 aa).

Residues 1 to 30 are Extracellular-facing; sequence MFANSSANTTSTNSSVLQCPDYRDTHRLHM. 3 N-linked (GlcNAc...) asparagine glycosylation sites follow: Asn4, Asn8, and Asn13. A helical membrane pass occupies residues 31–51; it reads VVYSLVLATGLPLNALALWVF. Residues 52-59 lie on the Cytoplasmic side of the membrane; sequence LRVLRVHS. Residues 60-80 traverse the membrane as a helical segment; it reads VVSVYMCNLAASDLLFTLSLP. Topologically, residues 81–100 are extracellular; it reads LRLSYYAQHHWPFPGFLCQT. Cysteines 98 and 179 form a disulfide. The chain crosses the membrane as a helical span at residues 101–121; that stretch reads SGAIFQMNMYGSCLFLMLINV. Residues 122 to 140 lie on the Cytoplasmic side of the membrane; the sequence is DRYAAIVHPLRLRHLRRPR. Residues 141–161 form a helical membrane-spanning segment; that stretch reads VARRLCLGVWALILLFAVPAA. Residues 162-191 are Extracellular-facing; the sequence is RVHSPSHCTYKNITVRLCFESFSDELWKGR. The N-linked (GlcNAc...) asparagine glycan is linked to Asn173. Residues 192–212 traverse the membrane as a helical segment; it reads LLPLLLLAEILGFLLPLAAVV. At 213-243 the chain is on the cytoplasmic side; that stretch reads YSSGRVFWTLARPDATQSQRRRKTVRLLLAN. The helical transmembrane segment at 244–264 threads the bilayer; it reads LIIFLLCFVPYNSTLAVYGLL. At 265-280 the chain is on the extracellular side; sequence RANLVKNSIQDRDQVR. Residues 281-301 form a helical membrane-spanning segment; the sequence is GVLMIMVLLAGANCVLDPLVY. Residues 302-372 are Cytoplasmic-facing; it reads YFSAEGFRNT…PDNCSQDSAL (71 aa).

Belongs to the G-protein coupled receptor 1 family.

The protein localises to the cell membrane. In terms of biological role, receptor for lysophosphatidic acid (LPA), a mediator of diverse cellular activities. In Mus musculus (Mouse), this protein is Lysophosphatidic acid receptor 5 (Lpar5).